The chain runs to 423 residues: Protein SOSEKI 5 (423 aa).

The disordered stretch occupies residues 1-33 (MSSRVFRATPDNNYLVPRRSKDQQDTSPDRNRI). Basic and acidic residues predominate over residues 19–33 (RSKDQQDTSPDRNRI). Positions 45–136 (RKVPVVYYLC…YVLKGSEVLD (92 aa)) are DIX-like oligomerization domain. 2 disordered regions span residues 150 to 172 (SSFR…PAVI) and 196 to 258 (SSAE…SPET). Positions 196-211 (SSAESTQRLAADASTQ) are enriched in polar residues. Short sequence motifs (association to cell membranes) lie at residues 233–234 (AS) and 303–304 (CG). The interval 379–423 (SSSYNADRCSRMGPTTEKDEEEAVRAKCIPRKPKPVAKRNNGGQQ) is disordered. Basic residues predominate over residues 406-415 (CIPRKPKPVA).

The protein belongs to the SOSEKI family. In terms of assembly, homodimer. Forms long polymer filaments with other SOKs proteins polymers (e.g. SOK1, SOK2, SOK3 and SOK4) crucial for polar localization and biological activity. Binds to ANGUSTIFOLIA (AN). In terms of tissue distribution, expressed during embryogenesis and in roots.

It localises to the cell membrane. Functionally, SOSEKI proteins (SOK1-5) locally interpret global polarity cues and can influence cell division orientation to coordinate cell polarization relative to body axes. The polypeptide is Protein SOSEKI 5 (Arabidopsis thaliana (Mouse-ear cress)).